The following is a 165-amino-acid chain: NAD(P)H-quinone oxidoreductase subunit J, chloroplastic (165 aa).

The protein belongs to the complex I 30 kDa subunit family. NDH is composed of at least 16 different subunits, 5 of which are encoded in the nucleus.

The protein resides in the plastid. Its subcellular location is the chloroplast thylakoid membrane. It catalyses the reaction a plastoquinone + NADH + (n+1) H(+)(in) = a plastoquinol + NAD(+) + n H(+)(out). It carries out the reaction a plastoquinone + NADPH + (n+1) H(+)(in) = a plastoquinol + NADP(+) + n H(+)(out). In terms of biological role, NDH shuttles electrons from NAD(P)H:plastoquinone, via FMN and iron-sulfur (Fe-S) centers, to quinones in the photosynthetic chain and possibly in a chloroplast respiratory chain. The immediate electron acceptor for the enzyme in this species is believed to be plastoquinone. Couples the redox reaction to proton translocation, and thus conserves the redox energy in a proton gradient. In Ipomoea purpurea (Common morning glory), this protein is NAD(P)H-quinone oxidoreductase subunit J, chloroplastic.